The primary structure comprises 927 residues: Translation initiation factor IF-2 (927 aa).

The segment at 27–338 (LGLPVKSHAS…APKPVTERKF (312 aa)) is disordered. Positions 49 to 69 (SFSSSKTKAPTNSVQTNQGVK) are enriched in polar residues. 2 stretches are compositionally biased toward basic and acidic residues: residues 70 to 86 (TESK…DDKP) and 101 to 138 (FKAE…DRRH). The segment covering 146-159 (GNRNDNRQGQQNNR) has biased composition (low complexity). 3 stretches are compositionally biased toward basic and acidic residues: residues 160 to 171 (NKNDGRYADHKQ), 202 to 226 (YSRH…EQEL), and 234 to 257 (AQEE…KEIV). The segment covering 300-316 (NWNNQNQVRNQRNSNWN) has biased composition (low complexity). One can recognise a tr-type G domain in the interval 428–597 (ERPPVVTIMG…LLVAEMEELK (170 aa)). Residues 437–444 (GHVDHGKT) form a G1 region. 437-444 (GHVDHGKT) lines the GTP pocket. A G2 region spans residues 462–466 (GITQH). A G3 region spans residues 483–486 (DTPG). GTP is bound by residues 483–487 (DTPGH) and 537–540 (NKID). Residues 537–540 (NKID) are G4. A G5 region spans residues 573 to 575 (SAK).

The protein belongs to the TRAFAC class translation factor GTPase superfamily. Classic translation factor GTPase family. IF-2 subfamily.

The protein localises to the cytoplasm. Its function is as follows. One of the essential components for the initiation of protein synthesis. Protects formylmethionyl-tRNA from spontaneous hydrolysis and promotes its binding to the 30S ribosomal subunits. Also involved in the hydrolysis of GTP during the formation of the 70S ribosomal complex. In Streptococcus agalactiae serotype Ia (strain ATCC 27591 / A909 / CDC SS700), this protein is Translation initiation factor IF-2.